A 632-amino-acid chain; its full sequence is Mitochondrial distribution and morphology protein 34 (632 aa).

Positions 1–203 constitute an SMP-LTD domain; that stretch reads MSFKVNWNSL…LPTLIHQLSL (203 aa). 2 disordered regions span residues 221 to 253 and 384 to 435; these read ANASTSSSSTSSTSSSTTSSSSSSSPSSFTSSL and KPKR…SSTL. The segment covering 224–252 has biased composition (low complexity); sequence STSSSSTSSTSSSTTSSSSSSSPSSFTSS. Over residues 384–400 the composition is skewed to basic residues; the sequence is KPKRRVIRLGKSKNKSK. Basic and acidic residues predominate over residues 401-412; sequence SKTETKTEHNDE. The span at 422–435 shows a compositional bias: low complexity; that stretch reads PLSSTPASSSSSTL.

Belongs to the MDM34 family. As to quaternary structure, component of the ER-mitochondria encounter structure (ERMES) or MDM complex, composed of MMM1, MDM10, MDM12 and MDM34.

Its subcellular location is the mitochondrion outer membrane. In terms of biological role, component of the ERMES/MDM complex, which serves as a molecular tether to connect the endoplasmic reticulum (ER) and mitochondria. Components of this complex are involved in the control of mitochondrial shape and protein biogenesis, and function in nonvesicular lipid trafficking between the ER and mitochondria. MDM34 is required for the interaction of the ER-resident membrane protein MMM1 and the outer mitochondrial membrane-resident beta-barrel protein MDM10. The polypeptide is Mitochondrial distribution and morphology protein 34 (Lodderomyces elongisporus (strain ATCC 11503 / CBS 2605 / JCM 1781 / NBRC 1676 / NRRL YB-4239) (Yeast)).